A 455-amino-acid polypeptide reads, in one-letter code: Cysteine--tRNA ligase (455 aa).

C28 is a Zn(2+) binding site. The 'HIGH' region motif lies at 30-40 (MTVYDYCHLGH). Zn(2+)-binding residues include C209, H234, and E238. A 'KMSKS' region motif is present at residues 266–270 (KMSKS). K269 lines the ATP pocket.

It belongs to the class-I aminoacyl-tRNA synthetase family. In terms of assembly, monomer. Zn(2+) serves as cofactor.

The protein localises to the cytoplasm. It catalyses the reaction tRNA(Cys) + L-cysteine + ATP = L-cysteinyl-tRNA(Cys) + AMP + diphosphate. The chain is Cysteine--tRNA ligase from Methylobacillus flagellatus (strain ATCC 51484 / DSM 6875 / VKM B-1610 / KT).